The sequence spans 188 residues: dCTP deaminase (188 aa).

DCTP-binding positions include 111-116 (KSTYAR), 135-137 (VLE), glutamine 156, tyrosine 170, and glutamine 180. Glutamate 137 functions as the Proton donor/acceptor in the catalytic mechanism.

Belongs to the dCTP deaminase family. As to quaternary structure, homotrimer.

It carries out the reaction dCTP + H2O + H(+) = dUTP + NH4(+). It participates in pyrimidine metabolism; dUMP biosynthesis; dUMP from dCTP (dUTP route): step 1/2. Catalyzes the deamination of dCTP to dUTP. The chain is dCTP deaminase from Protochlamydia amoebophila (strain UWE25).